A 101-amino-acid chain; its full sequence is Urease subunit beta (101 aa).

This sequence belongs to the urease beta subunit family. In terms of assembly, heterotrimer of UreA (gamma), UreB (beta) and UreC (alpha) subunits. Three heterotrimers associate to form the active enzyme.

It localises to the cytoplasm. It carries out the reaction urea + 2 H2O + H(+) = hydrogencarbonate + 2 NH4(+). The protein operates within nitrogen metabolism; urea degradation; CO(2) and NH(3) from urea (urease route): step 1/1. The sequence is that of Urease subunit beta from Burkholderia orbicola (strain MC0-3).